The sequence spans 228 residues: Urease accessory protein UreE (228 aa).

The interval Pro188–His228 is disordered. The span at Ser204 to His228 shows a compositional bias: basic and acidic residues.

It belongs to the UreE family.

The protein localises to the cytoplasm. Its function is as follows. Involved in urease metallocenter assembly. Binds nickel. Probably functions as a nickel donor during metallocenter assembly. The polypeptide is Urease accessory protein UreE (Yersinia kristensenii).